The following is a 530-amino-acid chain: MRSEKSLTLAAPGEVRGPEGEQQDAGEFQEAEGGGGCCSSERLVINISGLRYETQLRTLSLFPDTLLGDPGRRVRFFDPLRNEYFFDRNRPSFDAILYYYQSGGRLRRPVNVPLDIFMEEIRFYQLGDEALAAFREDEGCLPEGGEDEKPLPSQPFQRQVWLLFEYPESSGPARGIAIVSVLVILISIVIFCLETLPQFRADGRGGSNEGSGTRMSPASRGSHEEEDEDEDSYAFPGSIPSGGLGTGGTSSFSTLGGSFFTDPFFLVETLCIVWFTFELLVRFSACPSKAAFFRNIMNIIDLVAIFPYFITLGTELVQRHEQQPVSGGSGQNRQQAMSLAILRVIRLVRVFRIFKLSRHSKGLQILGKTLQASMRELGLLIFFLFIGVILFSSAVYFAEADDVDSLFPSIPDAFWWAVVTMTTVGYGDMYPMTVGGKIVGSLCAIAGVLTIALPVPVIVSNFNYFYHRETEQEEQGQYTHVTCGQPTPDLKATDNGLGKPDFAEASRERRSSYLPTPHRAYAEKRMLTEV.

Positions 1 to 35 (MRSEKSLTLAAPGEVRGPEGEQQDAGEFQEAEGGG) are disordered. At serine 3 the chain carries Phosphoserine. Residues 21–30 (EQQDAGEFQE) show a composition bias toward acidic residues. The helical transmembrane segment at 172 to 193 (PARGIAIVSVLVILISIVIFCL) threads the bilayer. Positions 203–239 (GRGGSNEGSGTRMSPASRGSHEEEDEDEDSYAFPGSI) are disordered. Phosphoserine; by CK2 is present on serine 222. A helical membrane pass occupies residues 264–285 (FFLVETLCIVWFTFELLVRFSA). The S-palmitoyl cysteine moiety is linked to residue cysteine 286. Residues 297-317 (MNIIDLVAIFPYFITLGTELV) form a helical membrane-spanning segment. Residues 339–359 (LAILRVIRLVRVFRIFKLSRH) traverse the membrane as a helical; Voltage-sensor segment. Residues 361–374 (KGLQILGKTLQASM) form an S4-S5 linker region. The helical transmembrane segment at 375–396 (RELGLLIFFLFIGVILFSSAVY) threads the bilayer. Residues 411-422 (PDAFWWAVVTMT) constitute an intramembrane region (helical). Positions 423–428 (TVGYGD) match the Selectivity filter motif. Residues 423–430 (TVGYGDMY) lie within the membrane without spanning it. Residues 438–466 (IVGSLCAIAGVLTIALPVPVIVSNFNYFY) traverse the membrane as a helical segment. Serine 512 bears the Phosphoserine; by PKA mark. The short motif at 527–529 (LTE) is the PDZ-binding element. Threonine 528 carries the post-translational modification Phosphothreonine; by PKA.

It belongs to the potassium channel family. A (Shaker) (TC 1.A.1.2) subfamily. Kv1.6/KCNA6 sub-subfamily. In terms of assembly, homotetramer and heterotetramer of potassium channel proteins. Interacts with KCNAB1 and KCNAB2.

Its subcellular location is the cell membrane. The catalysed reaction is K(+)(in) = K(+)(out). Its function is as follows. Voltage-gated potassium channel that mediates transmembrane potassium transport in excitable membranes. Forms tetrameric potassium-selective channels through which potassium ions pass in accordance with their electrochemical gradient. The channel alternates between opened and closed conformations in response to the voltage difference across the membrane. Can form functional homotetrameric channels and heterotetrameric channels that contain variable proportions of KCNA1, KCNA2, KCNA4, KNCA5, KCNA6, and possibly other family members as well; channel properties depend on the type of alpha subunits that are part of the channel. Channel properties are modulated by cytoplasmic beta subunits that regulate the subcellular location of the alpha subunits and promote rapid inactivation. Homotetrameric channels display rapid activation and slow inactivation. The protein is Potassium voltage-gated channel subfamily A member 6 (Kcna6) of Rattus norvegicus (Rat).